A 518-amino-acid chain; its full sequence is Crotonobetaine/carnitine--CoA ligase (518 aa).

It belongs to the ATP-dependent AMP-binding enzyme family.

The catalysed reaction is 4-(trimethylamino)butanoate + ATP + CoA = 4-(trimethylamino)butanoyl-CoA + AMP + diphosphate. It carries out the reaction crotonobetaine + ATP + CoA = crotonobetainyl-CoA + AMP + diphosphate. The enzyme catalyses (R)-carnitine + ATP + CoA = (R)-carnitinyl-CoA + AMP + diphosphate. Its pathway is amine and polyamine metabolism; carnitine metabolism. In terms of biological role, catalyzes the transfer of CoA to carnitine, generating the initial carnitinyl-CoA needed for the CaiB reaction cycle. Also has activity toward crotonobetaine and gamma-butyrobetaine. The chain is Crotonobetaine/carnitine--CoA ligase from Proteus mirabilis (strain HI4320).